A 264-amino-acid chain; its full sequence is Thymidylate synthase (264 aa).

Arginine 21 is a binding site for dUMP. Residue histidine 51 coordinates (6R)-5,10-methylene-5,6,7,8-tetrahydrofolate. 126-127 (RR) serves as a coordination point for dUMP. Cysteine 146 functions as the Nucleophile in the catalytic mechanism. Residues 166–169 (RSAD), asparagine 177, and 207–209 (HLY) each bind dUMP. Residue aspartate 169 participates in (6R)-5,10-methylene-5,6,7,8-tetrahydrofolate binding. Alanine 263 serves as a coordination point for (6R)-5,10-methylene-5,6,7,8-tetrahydrofolate.

The protein belongs to the thymidylate synthase family. Bacterial-type ThyA subfamily. As to quaternary structure, homodimer.

It is found in the cytoplasm. The enzyme catalyses dUMP + (6R)-5,10-methylene-5,6,7,8-tetrahydrofolate = 7,8-dihydrofolate + dTMP. The protein operates within pyrimidine metabolism; dTTP biosynthesis. In terms of biological role, catalyzes the reductive methylation of 2'-deoxyuridine-5'-monophosphate (dUMP) to 2'-deoxythymidine-5'-monophosphate (dTMP) while utilizing 5,10-methylenetetrahydrofolate (mTHF) as the methyl donor and reductant in the reaction, yielding dihydrofolate (DHF) as a by-product. This enzymatic reaction provides an intracellular de novo source of dTMP, an essential precursor for DNA biosynthesis. The polypeptide is Thymidylate synthase (Alkalilimnicola ehrlichii (strain ATCC BAA-1101 / DSM 17681 / MLHE-1)).